A 162-amino-acid chain; its full sequence is Protein archease (162 aa).

The Ca(2+) site is built by Asp34, Asp161, and Ile162.

This sequence belongs to the archease family. As to quaternary structure, component of the tRNA-splicing ligase complex.

Its function is as follows. Component of the tRNA-splicing ligase complex required to facilitate the enzymatic turnover of catalytic subunit RTCB. Together with ddx1, acts by facilitating the guanylylation of RTCB, a key intermediate step in tRNA ligation. The sequence is that of Protein archease from Ictalurus punctatus (Channel catfish).